The primary structure comprises 376 residues: Putative glutamate--cysteine ligase 2 (376 aa).

This sequence belongs to the glutamate--cysteine ligase type 2 family. YbdK subfamily.

It catalyses the reaction L-cysteine + L-glutamate + ATP = gamma-L-glutamyl-L-cysteine + ADP + phosphate + H(+). ATP-dependent carboxylate-amine ligase which exhibits weak glutamate--cysteine ligase activity. This chain is Putative glutamate--cysteine ligase 2, found in Corynebacterium glutamicum (strain R).